Consider the following 158-residue polypeptide: Putative cTAGE family member 3 (158 aa).

Positions 26–96 (QLQESQKQLL…AAVLEEDITD (71 aa)) form a coiled coil.

Belongs to the cTAGE family. As to expression, expressed in normal tissues including colon, mammary gland, ovary, placenta, stomach and testis, as well as several fetal tissues.

Functionally, tumor-associated antigen. The protein is Putative cTAGE family member 3 (CTAGE3P) of Homo sapiens (Human).